The primary structure comprises 1368 residues: DNA-directed RNA polymerase subunit beta (1368 aa).

This sequence belongs to the RNA polymerase beta chain family. In terms of assembly, the RNAP catalytic core consists of 2 alpha, 1 beta, 1 beta' and 1 omega subunit. When a sigma factor is associated with the core the holoenzyme is formed, which can initiate transcription.

It catalyses the reaction RNA(n) + a ribonucleoside 5'-triphosphate = RNA(n+1) + diphosphate. Its function is as follows. DNA-dependent RNA polymerase catalyzes the transcription of DNA into RNA using the four ribonucleoside triphosphates as substrates. This is DNA-directed RNA polymerase subunit beta from Burkholderia ambifaria (strain ATCC BAA-244 / DSM 16087 / CCUG 44356 / LMG 19182 / AMMD) (Burkholderia cepacia (strain AMMD)).